We begin with the raw amino-acid sequence, 218 residues long: Small ribosomal subunit protein uS3c (218 aa).

One can recognise a KH type-2 domain in the interval 47 to 117; it reads VRTHIRNSSN…KLKITLSEID (71 aa).

It belongs to the universal ribosomal protein uS3 family. Part of the 30S ribosomal subunit.

It is found in the plastid. It localises to the chloroplast. The polypeptide is Small ribosomal subunit protein uS3c (rps3) (Spirogyra maxima (Green alga)).